Here is a 369-residue protein sequence, read N- to C-terminus: Serine/threonine-protein acetyltransferase HopZ1a (369 aa).

The tract at residues M1 to Q46 is disordered. Residues D19–Q46 show a composition bias toward basic and acidic residues. 1D-myo-inositol hexakisphosphate is bound by residues R49, K53, and R106. Catalysis depends on residues H150 and E170. Position 150 (H150) interacts with CoA. CoA is bound by residues A177 and K211–T212. C216 is an active-site residue. 1D-myo-inositol hexakisphosphate is bound by residues N222, K226 to K229, and K289 to H290. The residue at position 289 (K289) is an N6-acetyllysine; by autocatalysis. A292–T295 is a binding site for CoA. 1D-myo-inositol hexakisphosphate contacts are provided by residues S314 to H317 and R326. CoA-binding positions include R331–R334 and S344–F348. Q358 and R362 together coordinate 1D-myo-inositol hexakisphosphate.

Belongs to the acetyltransferase YopJ family. In terms of assembly, interacts with host plant JAZ proteins (e.g. Glycine max JAZ1 and Arabidospis thaliana TIFY10B/JAZ2, TIFY11A/JAZ5, TIFY11B/JAZ6, TIFY5A/JAZ8 and TIFY3B/JAZ12) and triggers their degradation. Binds directly to SZE1 and SZE2 at the host plasma membrane; this interaction with a complex made of, at least, SZE1, BKN2/SZE2, ZAR1 and ZED1 triggers host immunity. It depends on 1D-myo-inositol hexakisphosphate as a cofactor. In terms of processing, autoacetylated at Lys-289; while autoacetylation at Lys-289 is required for virulence function to some extent, it is not essential.

The protein localises to the secreted. It localises to the host cell membrane. Its subcellular location is the host cytoplasm. It is found in the host cytoskeleton. The protein resides in the host nucleus. It catalyses the reaction L-threonyl-[protein] + acetyl-CoA = O-acetyl-L-threonyl-[protein] + CoA. It carries out the reaction L-seryl-[protein] + acetyl-CoA = O-acetyl-L-seryl-[protein] + CoA. The enzyme catalyses L-lysyl-[protein] + acetyl-CoA = N(6)-acetyl-L-lysyl-[protein] + CoA + H(+). Its activity is regulated as follows. 1D-myo-inositol hexakisphosphate activates protein-acetyltransferase activity via an allosteric mechanism: 1D-myo-inositol hexakisphosphate-binding induces a conformational rearrangement that stimulates the interaction with acetyl-CoA. Acetyltransferase activity is activated by phytic acid. Functionally, serine/threonine-protein acetyltransferase translocated into infected cells, which impairs host microtubule network and host immunity by mediating acetylation of target proteins. Blocks secretion in host cells by mediating acetylation of host tubulin, thereby impairing host microbubule network. Impairs host cell immunity by mediating acetylation of host TIFY/JAZ transcription repressors (Arabidopsis thaliana TIFY10B/JAZ2, TIFY11A/JAZ5, TIFY11B/JAZ6, TIFY5A/JAZ8, TIFY9/JAZ10 and TIFY3B/JAZ12), thereby activating host jasmonate signaling. This Pseudomonas syringae pv. syringae protein is Serine/threonine-protein acetyltransferase HopZ1a.